A 402-amino-acid chain; its full sequence is Zinc finger CCHC domain-containing protein 12 (402 aa).

Acidic residues predominate over residues 268–277; sequence DTPDDSDEDV. The tract at residues 268 to 342 is disordered; sequence DTPDDSDEDV…PGNMRRTRKR (75 aa). Polar residues predominate over residues 311–323; sequence SPNNSQFPSPCTS. The CCHC-type zinc finger occupies 346 to 363; sequence IRCSYCGEEGHSKETCDN. Positions 383–392 are enriched in basic and acidic residues; the sequence is HTEERSREAP. The disordered stretch occupies residues 383 to 402; that stretch reads HTEERSREAPVEPSDPCELQ.

The protein belongs to the ZCCHC12 family. Interacts with SMAD1 and CREB-binding protein (CBP). Forms a protein-DNA complex through its association with SMAD1.

Transcriptional coactivator in the bone morphogenetic protein (BMP)-signaling pathway. It positively modulates BMP signaling by interacting with SMAD1 and associating with CBP in the transcription complex. It contributes to the BMP-induced enhancement of cholinergic-neuron-specific gene expression. The sequence is that of Zinc finger CCHC domain-containing protein 12 (ZCCHC12) from Bos taurus (Bovine).